The following is a 186-amino-acid chain: Ribosome rescue factor SmrB (186 aa).

The region spanning 99–174 is the Smr domain; it reads IDLHGLTQHQ…SDAAIIVIIE (76 aa).

This sequence belongs to the SmrB family. In terms of assembly, associates with collided ribosomes, but not with correctly translating polysomes.

Acts as a ribosome collision sensor. Detects stalled/collided disomes (pairs of ribosomes where the leading ribosome is stalled and a second ribosome has collided with it) and endonucleolytically cleaves mRNA at the 5' boundary of the stalled ribosome. Stalled/collided disomes form a new interface (primarily via the 30S subunits) that binds SmrB. Cleaved mRNA becomes available for tmRNA ligation, leading to ribosomal subunit dissociation and rescue of stalled ribosomes. This chain is Ribosome rescue factor SmrB, found in Buchnera aphidicola subsp. Acyrthosiphon pisum (strain 5A).